Here is a 217-residue protein sequence, read N- to C-terminus: MQHSAWHTLIKEQLPEGYFAKINHFLDEVYASGTIYPPREKVFNAIQTTDLADVKVVILGQDPYHGPKQAQGLSFSVPDDIPAPPSLQNILKELADDIGVKESHDLTSWAQQGVLLLNAGLTVPAGQANAHAGLIWEPFTDAIIKVVNEKSDPVVFILWGSYARKKKNLISNSQHLIIESAHPSPLSAYRGFFGSKPFSRTNDFLVAKGLEPINWLA.

Residue D62 is the Proton acceptor of the active site.

This sequence belongs to the uracil-DNA glycosylase (UDG) superfamily. UNG family.

Its subcellular location is the cytoplasm. It catalyses the reaction Hydrolyzes single-stranded DNA or mismatched double-stranded DNA and polynucleotides, releasing free uracil.. Its function is as follows. Excises uracil residues from the DNA which can arise as a result of misincorporation of dUMP residues by DNA polymerase or due to deamination of cytosine. The sequence is that of Uracil-DNA glycosylase from Streptococcus gordonii (strain Challis / ATCC 35105 / BCRC 15272 / CH1 / DL1 / V288).